The sequence spans 647 residues: Macrolide export ATP-binding/permease protein MacB (647 aa).

In terms of domain architecture, ABC transporter spans 6 to 244 (LEISGCYRTF…VDTAVTKINN (239 aa)). ATP is bound at residue 42–49 (GASGSGKS). Helical transmembrane passes span 273 to 293 (FLTM…VALG), 522 to 542 (LLIS…VMNI), 577 to 597 (LVCL…GVVF), and 612 to 632 (SIVA…FLPA).

Belongs to the ABC transporter superfamily. Macrolide exporter (TC 3.A.1.122) family. Homodimer. Part of the tripartite efflux system MacAB-TolC, which is composed of an inner membrane transporter, MacB, a periplasmic membrane fusion protein, MacA, and an outer membrane component, TolC. The complex forms a large protein conduit and can translocate molecules across both the inner and outer membranes. Interacts with MacA.

The protein resides in the cell inner membrane. Its function is as follows. Part of the tripartite efflux system MacAB-TolC. MacB is a non-canonical ABC transporter that contains transmembrane domains (TMD), which form a pore in the inner membrane, and an ATP-binding domain (NBD), which is responsible for energy generation. Confers resistance against macrolides. This chain is Macrolide export ATP-binding/permease protein MacB, found in Shewanella sp. (strain W3-18-1).